A 257-amino-acid chain; its full sequence is Nuclear receptor subfamily 0 group B member 2 (257 aa).

The NR LBD domain maps to 16–257 (SRPAILYALL…GLLGDMLLLR (242 aa)). Arginine 57 is subject to Symmetric dimethylarginine; by PRMT5.

This sequence belongs to the nuclear hormone receptor family. NR0 subfamily. Interacts (via N-terminus) with NEUROD1 (via N-terminus and C-terminus). Interacts with ID2. Interacts with RORG, NFIL3, NR1D1 and BHLHE41. Heterodimer; efficient DNA binding requires dimerization with another bHLH protein. Interacts with RARA, RXRA, THRB, NR5A1, NR5A2, NR1I3, PPARA, PPARG and EID1. Interacts with HNF4A; the resulting heterodimer is transcriptionally inactive. Interacts with DDX3X; this interaction disrupts the interaction between HNF4 and NR0B2/SHP that forms inactive heterodimers and enhances the formation of active HNF4 homodimers. Post-translationally, arginine methylation by PRMT5 enhances repression activity of metabolic genes in liver in response to bile acid signaling, by increasing interaction with cofactors. Liver. Low levels of expression were detected in heart and pancreas.

It localises to the nucleus. Its subcellular location is the cytoplasm. Its function is as follows. Transcriptional regulator that acts as a negative regulator of receptor-dependent signaling pathways. Specifically inhibits transactivation of the nuclear receptor with which it interacts. Inhibits transcriptional activity of NEUROD1 on E-box-containing promoter by interfering with the coactivation function of the p300/CBP-mediated transcription complex for NEUROD1. Essential component of the liver circadian clock which via its interaction with NR1D1 and RORG regulates NPAS2-mediated hepatic lipid metabolism. Regulates the circadian expression of cytochrome P450 (CYP) enzymes. Represses: NR5A2 and HNF4A to down-regulate CYP2C38, NFLI3 to up-regulate CYP2A5, BHLHE41/HNF1A axis to up-regulate CYP1A2, CYP2E1 and CYP3A11, and NR1D1 to up-regulate CYP2B10, CYP4A10 and CYP4A14. This is Nuclear receptor subfamily 0 group B member 2 (NR0B2) from Homo sapiens (Human).